Reading from the N-terminus, the 134-residue chain is Replication enhancer protein (134 aa).

The protein belongs to the geminiviridae replication enhancer protein family. Homooligomer. Interacts with the replication-associated protein (REP). Interacts with host proliferating cell nuclear antigen (PCNA). Interacts with host retinoblastoma-related protein 1 (RBR1), and may thereby deregulate the host cell cycle. Oligomerization and interaction with PCNA are necessary for optimal replication enhancement.

Its function is as follows. Increases viral DNA accumulation. Enhances infectivity and symptom expression. This African cassava mosaic virus (isolate West Kenyan 844) (ACMV) protein is Replication enhancer protein.